Reading from the N-terminus, the 1116-residue chain is Pleckstrin homology domain-containing family A member 5 (1116 aa).

N-acetylalanine is present on A2. A WW 1 domain is found at 10-43 (ISLPRSWTYGITRGGRVFFINEEAKSTTWLHPVT). Phosphoserine is present on S55. The region spanning 56–89 (TDLPTGWEEAYTFEGARYYINHNERKVTCKHPVT) is the WW 2 domain. Residues 140-163 (SPVGRTSRASKKVHNFGKRSNSIK) form a disordered region. Residues 147–156 (RASKKVHNFG) show a composition bias toward basic residues. The PH domain maps to 169 to 268 (PVVRRGWLYK…WMKAMLDAAL (100 aa)). A Glycyl lysine isopeptide (Lys-Gly) (interchain with G-Cter in SUMO2) cross-link involves residue K301. Phosphoserine occurs at positions 382 and 410. 2 positions are modified to phosphothreonine: T438 and T460. Residues 459–495 (RTLPRNSKTRPESICSVTPSTHDKTLGPGAEEKRRSM) are disordered. Residues 479–495 (THDKTLGPGAEEKRRSM) show a composition bias toward basic and acidic residues. Phosphoserine is present on residues S568, S607, S809, S855, S933, and S937. Disordered stretches follow at residues 928 to 978 (GASD…PATE) and 1025 to 1116 (RNKD…FMCV). Positions 930 to 949 (SDQSPLQSPSNLRDNPFRTT) are enriched in polar residues. Over residues 952-978 (RRRDDKELDTAIRENDVKPDHETPATE) the composition is skewed to basic and acidic residues. A compositionally biased stretch (polar residues) spans 1036-1046 (FSPQDETQTAN). Basic and acidic residues predominate over residues 1047 to 1061 (HKPEEHPEENTKNSV). Residues 1070-1085 (SYESTPEVSRGNQTMA) are compositionally biased toward polar residues. Positions 1088 to 1101 (SLSPSPESSASPVP) are enriched in low complexity.

In terms of tissue distribution, highly expressed in heart and kidney.

Its subcellular location is the cytoplasm. This Homo sapiens (Human) protein is Pleckstrin homology domain-containing family A member 5 (PLEKHA5).